Reading from the N-terminus, the 635-residue chain is Chaperone protein DnaK (635 aa).

Threonine 198 is modified (phosphothreonine; by autocatalysis). The interval glutamine 606–lysine 635 is disordered. The span at aspartate 622–lysine 635 shows a compositional bias: acidic residues.

The protein belongs to the heat shock protein 70 family.

In terms of biological role, acts as a chaperone. In Novosphingobium aromaticivorans (strain ATCC 700278 / DSM 12444 / CCUG 56034 / CIP 105152 / NBRC 16084 / F199), this protein is Chaperone protein DnaK.